We begin with the raw amino-acid sequence, 252 residues long: Indole-3-glycerol phosphate synthase (252 aa).

The protein belongs to the TrpC family.

It catalyses the reaction 1-(2-carboxyphenylamino)-1-deoxy-D-ribulose 5-phosphate + H(+) = (1S,2R)-1-C-(indol-3-yl)glycerol 3-phosphate + CO2 + H2O. It participates in amino-acid biosynthesis; L-tryptophan biosynthesis; L-tryptophan from chorismate: step 4/5. In Listeria welshimeri serovar 6b (strain ATCC 35897 / DSM 20650 / CCUG 15529 / CIP 8149 / NCTC 11857 / SLCC 5334 / V8), this protein is Indole-3-glycerol phosphate synthase.